The sequence spans 143 residues: Potassium voltage-gated channel subfamily E regulatory beta subunit 5 (143 aa).

N-linked (GlcNAc...) asparagine glycans are attached at residues asparagine 2 and asparagine 25. The helical transmembrane segment at 61-81 (LYILLIMIFYACLAGGLILAY) threads the bilayer. Topologically, residues 82–143 (TRSRKLVEAK…PALAQGAERV (62 aa)) are cytoplasmic.

The protein belongs to the potassium channel KCNE family. In terms of assembly, interacts with KCNQ1; impairs KCNQ1 localization in lipid rafts and only conducts current upon strong and continued depolarization. Detected in embryonal dorsal root and nerve ganglia, in the somites and in myoepicardial layer of the developing heart wall. Detected at lower levels in the central nervous system (CNS) and in developing limb.

Its subcellular location is the membrane. Its function is as follows. Potassium channel ancillary subunit that is essential for generation of some native K(+) currents by virtue of formation of heteromeric ion channel complex with voltage-gated potassium (Kv) channel pore-forming alpha subunits. Functions as an inhibitory beta-subunit of the repolarizing cardiac potassium ion channel KCNQ1. This is Potassium voltage-gated channel subfamily E regulatory beta subunit 5 (Kcne5) from Mus musculus (Mouse).